A 100-amino-acid polypeptide reads, in one-letter code: Cytochrome bo(3) ubiquinol oxidase subunit 4 (100 aa).

Topologically, residues 1-9 (MLKNRYLKY) are cytoplasmic. Residues 10 to 32 (LFILILLSILSIMPIFAIIYRIF) form a helical membrane-spanning segment. The Extracellular portion of the chain corresponds to 33 to 36 (SRNY). Residues 37 to 59 (LYAFIIVCLFFQILAHIKFFLNL) form a helical membrane-spanning segment. The Cytoplasmic segment spans residues 60 to 68 (DFSLEQRWK). Residues 69–90 (LISVIFSLVVGLIILLGSIWVI) form a helical membrane-spanning segment. At 91–100 (KNLNNNLCIM) the chain is on the extracellular side.

This sequence belongs to the cytochrome c oxidase bacterial subunit 4 family. In terms of assembly, heterooctamer of two A chains, two B chains, two C chains and two D chains.

Its subcellular location is the cell membrane. Functionally, cytochrome bo(3) ubiquinol terminal oxidase is the component of the aerobic respiratory chain of E.coli that predominates when cells are grown at high aeration. Has proton pump activity across the membrane in addition to electron transfer, pumping 2 protons/electron. This is Cytochrome bo(3) ubiquinol oxidase subunit 4 (cyoD) from Buchnera aphidicola subsp. Baizongia pistaciae (strain Bp).